Reading from the N-terminus, the 239-residue chain is Small ribosomal subunit protein uS3 (239 aa).

The KH type-2 domain maps to 39 to 109; sequence IRAMIQEIPE…KVQIKIKEVK (71 aa). The segment at 219-239 is disordered; the sequence is GALLKKQRRPRTEKPAQAGRQ.

The protein belongs to the universal ribosomal protein uS3 family. Part of the 30S ribosomal subunit. Forms a tight complex with proteins S10 and S14.

Its function is as follows. Binds the lower part of the 30S subunit head. Binds mRNA in the 70S ribosome, positioning it for translation. The protein is Small ribosomal subunit protein uS3 of Treponema denticola (strain ATCC 35405 / DSM 14222 / CIP 103919 / JCM 8153 / KCTC 15104).